A 253-amino-acid polypeptide reads, in one-letter code: POU Class 2 homeobox-associating factor 3 (253 aa).

Residues 5 to 27 form the OCA domain; it reads PKVYQGVRVKMTVKELLQQRRAH.

The protein belongs to the POU2AF family. Interacts with POU2F3 in a DNA-dependent manner; this interaction increases POU2F3 transactivation activity. In terms of tissue distribution, expressed in tuft cells.

The protein resides in the cytoplasm. It is found in the nucleus. Transcriptional coactivator that specifically associates with POU2F3. This complex drives the development of tuft cells, a rare a rare chemosensory cells that coordinate immune and neural functions within mucosal epithelial tissues. This is POU Class 2 homeobox-associating factor 3 from Mus musculus (Mouse).